The following is a 357-amino-acid chain: MADAATISKLEEGFKKLQGATDCKSLLKKYLTKDVFDQLKAKKTSLGATLLDVIQSGVENLDSGVGVYAPDAEAYTLFAPLFDPIIEDYHKGFKQTDKHPNKDFGDVNQFVNVDPDGKFVISTRVRCGRSMEGYPFNPCLTEAQYKEMEAKVFSTLSSLEGELKGSFYPLTGMAKDVQQKLIDDHFLFKEGDRFLQAANACRYWPSGRGIYHNDNKTFLVWCNEEDHLRIISMQMGGDLGQVYRRLVSAVNEIEKRVPFSHHDRLGFLTFCPTNLGTTVRASVHIKLPKLAANREKLEEVAGKYSLQVRGTRGEHTEAEGGIYDISNKRRMGLTEFQAVKEMQDGILELIKIEKEMQ.

Ala-2 carries the post-translational modification N-acetylalanine. The 83-residue stretch at Lys-9–Lys-91 folds into the Phosphagen kinase N-terminal domain. Gly-64 to Tyr-68 is a binding site for L-arginine. In terms of domain architecture, Phosphagen kinase C-terminal spans Phe-119–Met-356. ATP is bound by residues Ser-122 to Arg-126 and His-185. L-arginine is bound at residue Glu-225. Arg-229 provides a ligand contact to ATP. Residue Cys-271 participates in L-arginine binding. ATP contacts are provided by residues Arg-280–His-284 and Arg-309–Glu-314. Glu-314 lines the L-arginine pocket.

The protein belongs to the ATP:guanido phosphotransferase family.

The enzyme catalyses L-arginine + ATP = N(omega)-phospho-L-arginine + ADP + H(+). The polypeptide is Arginine kinase (Pachygrapsus marmoratus (Marbled rock crab)).